Reading from the N-terminus, the 205-residue chain is Dr1-associated corepressor (205 aa).

Positions 14 to 77 (PARIKKIMQT…SHLKQCIELE (64 aa)) constitute a Histone-fold domain. Residues 91–205 (PDMQGDGEDN…DEEDEEDYDS (115 aa)) form a disordered region. Basic and acidic residues predominate over residues 98-108 (EDNHMDGDKGA). The span at 114-125 (PGSGGRKNGGMG) shows a compositional bias: gly residues. The span at 138–155 (SEQEDESEDTDTDGEEET) shows a compositional bias: acidic residues. The segment covering 184 to 193 (PLPPAPPGPS) has biased composition (pro residues). Acidic residues predominate over residues 195–205 (PDEEDEEDYDS).

It belongs to the NC2 alpha/DRAP1 family. As to quaternary structure, heterodimer with DR1. Binds BTAF1. Phosphorylation reduces DNA binding, but has no effect on heterodimerization and TBP binding. Ubiquitous. Highly expressed in adult testis, heart, skeletal muscle, pancreas and brain, and in fetal brain, liver and kidney.

The protein resides in the nucleus. Its function is as follows. The association of the DR1/DRAP1 heterodimer with TBP results in a functional repression of both activated and basal transcription of class II genes. This interaction precludes the formation of a transcription-competent complex by inhibiting the association of TFIIA and/or TFIIB with TBP. Can bind to DNA on its own. This Homo sapiens (Human) protein is Dr1-associated corepressor (DRAP1).